A 117-amino-acid polypeptide reads, in one-letter code: uncharacterized protein (117 aa).

This is an uncharacterized protein from Methanocaldococcus jannaschii (strain ATCC 43067 / DSM 2661 / JAL-1 / JCM 10045 / NBRC 100440) (Methanococcus jannaschii).